A 526-amino-acid chain; its full sequence is Lycopene epsilon cyclase, chloroplastic (526 aa).

108–136 (LVVIGCGPAGLALAAESAKLGLNVGLVGP) contributes to the NAD(+) binding site. The next 2 membrane-spanning stretches (helical) occupy residues 443–463 (FFLF…RSFF) and 477–497 (FLGS…MFII).

It belongs to the lycopene cyclase family.

It localises to the plastid. Its subcellular location is the chloroplast membrane. It catalyses the reaction a carotenoid psi-end group = a carotenoid epsilon-end group. The protein operates within carotenoid biosynthesis; alpha-zeacarotene biosynthesis. It participates in carotenoid biosynthesis; delta-carotene biosynthesis. Functionally, catalyzes the single cyclization reaction which converts lycopene to delta-carotene and neurosporene to alpha-zeacarotene. Required for lutein biosynthesis. The polypeptide is Lycopene epsilon cyclase, chloroplastic (Solanum lycopersicum (Tomato)).